A 136-amino-acid chain; its full sequence is Transcription antitermination protein NusB (136 aa).

It belongs to the NusB family.

Its function is as follows. Involved in transcription antitermination. Required for transcription of ribosomal RNA (rRNA) genes. Binds specifically to the boxA antiterminator sequence of the ribosomal RNA (rrn) operons. This Salinispora tropica (strain ATCC BAA-916 / DSM 44818 / JCM 13857 / NBRC 105044 / CNB-440) protein is Transcription antitermination protein NusB.